Consider the following 157-residue polypeptide: Endoribonuclease YbeY (157 aa).

Residues His-116, His-120, and His-126 each contribute to the Zn(2+) site.

Belongs to the endoribonuclease YbeY family. It depends on Zn(2+) as a cofactor.

The protein resides in the cytoplasm. In terms of biological role, single strand-specific metallo-endoribonuclease involved in late-stage 70S ribosome quality control and in maturation of the 3' terminus of the 16S rRNA. The polypeptide is Endoribonuclease YbeY (Paenarthrobacter aurescens (strain TC1)).